Reading from the N-terminus, the 150-residue chain is D-aminoacyl-tRNA deacylase (150 aa).

Positions 136 to 137 (GP) match the Gly-cisPro motif, important for rejection of L-amino acids motif.

Belongs to the DTD family. Homodimer.

It localises to the cytoplasm. It carries out the reaction glycyl-tRNA(Ala) + H2O = tRNA(Ala) + glycine + H(+). The catalysed reaction is a D-aminoacyl-tRNA + H2O = a tRNA + a D-alpha-amino acid + H(+). In terms of biological role, an aminoacyl-tRNA editing enzyme that deacylates mischarged D-aminoacyl-tRNAs. Also deacylates mischarged glycyl-tRNA(Ala), protecting cells against glycine mischarging by AlaRS. Acts via tRNA-based rather than protein-based catalysis; rejects L-amino acids rather than detecting D-amino acids in the active site. By recycling D-aminoacyl-tRNA to D-amino acids and free tRNA molecules, this enzyme counteracts the toxicity associated with the formation of D-aminoacyl-tRNA entities in vivo and helps enforce protein L-homochirality. This is D-aminoacyl-tRNA deacylase from Staphylococcus haemolyticus (strain JCSC1435).